The primary structure comprises 277 residues: Phosphoenolpyruvate synthase regulatory protein (277 aa).

157–164 provides a ligand contact to ADP; the sequence is GVSRCGKT.

It belongs to the pyruvate, phosphate/water dikinase regulatory protein family. PSRP subfamily.

It carries out the reaction [pyruvate, water dikinase] + ADP = [pyruvate, water dikinase]-phosphate + AMP + H(+). The catalysed reaction is [pyruvate, water dikinase]-phosphate + phosphate + H(+) = [pyruvate, water dikinase] + diphosphate. In terms of biological role, bifunctional serine/threonine kinase and phosphorylase involved in the regulation of the phosphoenolpyruvate synthase (PEPS) by catalyzing its phosphorylation/dephosphorylation. In Shigella boydii serotype 4 (strain Sb227), this protein is Phosphoenolpyruvate synthase regulatory protein.